The following is a 488-amino-acid chain: Probable Xaa-Pro aminopeptidase ATEG_00858 (488 aa).

Residues D273, D284, E417, and E456 each coordinate Mn(2+).

It belongs to the peptidase M24B family. It depends on Mn(2+) as a cofactor.

It catalyses the reaction Release of any N-terminal amino acid, including proline, that is linked to proline, even from a dipeptide or tripeptide.. Functionally, catalyzes the removal of a penultimate prolyl residue from the N-termini of peptides. The polypeptide is Probable Xaa-Pro aminopeptidase ATEG_00858 (Aspergillus terreus (strain NIH 2624 / FGSC A1156)).